The following is a 551-amino-acid chain: Membrane protein insertase YidC (551 aa).

Residues 3-23 (ANHIRILLLVTIAIMFISLMG) traverse the membrane as a helical segment. The span at 33–47 (NTKQQTSATQNNSHY) shows a compositional bias: polar residues. A disordered region spans residues 33–59 (NTKQQTSATQNNSHYDNADSSTNTDVT). Positions 50–59 (ADSSTNTDVT) are enriched in low complexity. 3 helical membrane-spanning segments follow: residues 361–381 (LVGNWGLAIILVTCLIKLIFY), 431–451 (LSGCLPMLIQIPIFISLYWVL), and 504–524 (VMMFLPVIFTFLFASFPSGLV).

The protein belongs to the OXA1/ALB3/YidC family. Type 1 subfamily. In terms of assembly, interacts with the Sec translocase complex via SecD. Specifically interacts with transmembrane segments of nascent integral membrane proteins during membrane integration.

The protein localises to the cell inner membrane. Required for the insertion and/or proper folding and/or complex formation of integral membrane proteins into the membrane. Involved in integration of membrane proteins that insert both dependently and independently of the Sec translocase complex, as well as at least some lipoproteins. Aids folding of multispanning membrane proteins. This chain is Membrane protein insertase YidC, found in Francisella tularensis subsp. mediasiatica (strain FSC147).